Consider the following 221-residue polypeptide: Nucleolar protein 3 (221 aa).

Gly2 carries the N-myristoyl glycine lipid modification. Residues 4–95 enclose the CARD domain; the sequence is MQERPSETID…MPDPAWDWQH (92 aa). An essential for interaction with BAX region spans residues 20-70; it reads VETLQADSGLLLDALVARGVLTGPEYEALDALPDAERRVRRLLLLVQSKGE. A disordered region spans residues 107–221; the sequence is PPCPGHWTPE…GDESEGCENT (115 aa). Acidic residues predominate over residues 132–143; it reads EEEEIGGPEDSE. At Thr149 the chain carries Phosphothreonine; by CK2. Composition is skewed to acidic residues over residues 165 to 201 and 209 to 221; these read PDLE…EPEP and FQEG…CENT.

Oligomerizes (via CARD doamin). Interacts (via CARD domain) with CASP2; inhibits CASP2 activity in a phosphorylation-dependent manner. Interacts with CASP8; decreases CASP8 activity in a mitochondria localization- and phosphorylation-dependent manner and this interaction is dissociated by calcium. Interacts with TFPT; translocates NOL3 into the nucleus and negatively regulated TFPT-induced cell death. Interacts directly (via CARD domain) with FAS and FADD (via DED domain); inhibits death-inducing signaling complex (DISC) assembly by inhibiting the increase in FAS-FADD binding induced by FAS activation. Interacts (via CARD domain) with BAX (via a C-terminal 33 residues); inhibits BAX activation and translocation and consequently cytochrome c release from mitochondria. Interacts with PPM1G; may dephosphorylate NOL3. Interacts (via CARD domain) with BBC3 (via BH3 domain); preventing the association of BBC3 with BCL2 and resulting in activation of CASP8. Interacts (via CARD domain) with BAD(via BH3 domain); preventing the association of BAD with BCL2. Interacts directly (via CARD domain) with TNFRSF1A; inhibits TNF-signaling pathway. Phosphorylation at Thr-149 is required for its antiapoptotic effect by blocking death-inducing signaling complex (DISC) activity through the control of interaction with CASP8. Phosphorylation at Thr-149 results in translocation to mitochondria and this translocation enables the binding to CASP8. Dephosphorylated at Thr-149 by calcineurin; doesn't inhibit the association between FADD and CASP8 and the consequent apoptosis. Post-translationally, polyubiquitinated by MDM2; promoting proteasomal-dependent degradation in response to apoptotic stimuli. As to expression, highly expressed in skeletal muscle, heart and medulla.

The protein resides in the cytoplasm. The protein localises to the mitochondrion. It localises to the sarcoplasmic reticulum. It is found in the membrane. Its function is as follows. Apoptosis repressor that blocks multiple modes of cell death. Inhibits extrinsic apoptotic pathways through two different ways. Firstly by interacting with FAS and FADD upon FAS activation blocking death-inducing signaling complex (DISC) assembly. Secondly by interacting with CASP8 in a mitochondria localization- and phosphorylation-dependent manner, limiting the amount of soluble CASP8 available for DISC-mediated activation. Inhibits intrinsic apoptotic pathway in response to a wide range of stresses, through its interaction with BAX resulting in BAX inactivation, preventing mitochondrial dysfunction and release of pro-apoptotic factors. Inhibits calcium-mediated cell death by functioning as a cytosolic calcium buffer, dissociating its interaction with CASP8 and maintaining calcium homeostasis. Negatively regulates oxidative stress-induced apoptosis by phosphorylation-dependent suppression of the mitochondria-mediated intrinsic pathway, by blocking CASP2 activation and BAX translocation. Negatively regulates hypoxia-induced apoptosis in part by inhibiting the release of cytochrome c from mitochondria in a caspase-independent manner. Also inhibits TNF-induced necrosis by preventing TNF-signaling pathway through TNFRSF1A interaction abrogating the recruitment of RIPK1 to complex I. Finally through its role as apoptosis repressor, promotes vascular remodeling through inhibition of apoptosis and stimulation of proliferation, in response to hypoxia. Inhibits too myoblast differentiation through caspase inhibition. This is Nucleolar protein 3 (Nol3) from Rattus norvegicus (Rat).